The primary structure comprises 161 residues: AP-1 complex subunit sigma-1 (161 aa).

Belongs to the adaptor complexes small subunit family. In terms of assembly, adaptor protein complex 1 (AP-1) is a heterotetramer composed of two large adaptins (gamma-type subunit and beta-type subunit), a medium adaptin (mu-type subunit) and a small adaptin (sigma-type subunit). In terms of tissue distribution, expressed in seedlings, roots, stems, leaves, flowers and siliques (developing fruits and seeds).

Its subcellular location is the golgi apparatus. It is found in the cytoplasmic vesicle. The protein resides in the clathrin-coated vesicle membrane. In terms of biological role, subunit of clathrin-associated adaptor protein complex 1 that plays a role in protein sorting at the trans-Golgi network and early endosomes (TGN/EE). The AP complexes mediate the recruitment of clathrin to membranes and the recognition of sorting signals within the cytosolic tails of transmembrane cargo molecules. In Arabidopsis thaliana (Mouse-ear cress), this protein is AP-1 complex subunit sigma-1 (AAP19-1).